The chain runs to 142 residues: Large ribosomal subunit protein uL11 (142 aa).

This sequence belongs to the universal ribosomal protein uL11 family. In terms of assembly, part of the ribosomal stalk of the 50S ribosomal subunit. Interacts with L10 and the large rRNA to form the base of the stalk. L10 forms an elongated spine to which L12 dimers bind in a sequential fashion forming a multimeric L10(L12)X complex. Post-translationally, one or more lysine residues are methylated.

Functionally, forms part of the ribosomal stalk which helps the ribosome interact with GTP-bound translation factors. The chain is Large ribosomal subunit protein uL11 from Xylella fastidiosa (strain 9a5c).